Here is a 176-residue protein sequence, read N- to C-terminus: Glutamyl-tRNA(Gln) amidotransferase subunit F, mitochondrial (176 aa).

This sequence belongs to the GatF family. As to quaternary structure, subunit of the heterotrimeric GatFAB amidotransferase (AdT) complex, composed of A, B and F subunits.

Its subcellular location is the mitochondrion inner membrane. It catalyses the reaction L-glutamyl-tRNA(Gln) + L-glutamine + ATP + H2O = L-glutaminyl-tRNA(Gln) + L-glutamate + ADP + phosphate + H(+). In terms of biological role, allows the formation of correctly charged Gln-tRNA(Gln) through the transamidation of misacylated Glu-tRNA(Gln) in the mitochondria. The reaction takes place in the presence of glutamine and ATP through an activated gamma-phospho-Glu-tRNA(Gln). Required for proper protein synthesis within the mitochondrion. This Yarrowia lipolytica (strain CLIB 122 / E 150) (Yeast) protein is Glutamyl-tRNA(Gln) amidotransferase subunit F, mitochondrial.